Reading from the N-terminus, the 113-residue chain is Hydrogenase maturation factor HybF (113 aa).

Histidine 2 and glutamate 3 together coordinate Ni(2+). Positions 73, 76, 89, and 92 each coordinate Zn(2+).

It belongs to the HypA/HybF family. HybF subfamily.

Its function is as follows. Involved in the maturation of [NiFe] hydrogenases. Required for nickel insertion into the metal center of the hydrogenase. This is Hydrogenase maturation factor HybF from Proteus vulgaris.